A 338-amino-acid chain; its full sequence is Anthranilate phosphoribosyltransferase (338 aa).

Residues Gly81, 84–85 (GD), Ser89, 91–94 (NVST), 109–117 (KHGNRALSS), and Ala121 each bind 5-phospho-alpha-D-ribose 1-diphosphate. Residue Gly81 coordinates anthranilate. Ser93 is a Mg(2+) binding site. An anthranilate-binding site is contributed by Asn112. Arg167 serves as a coordination point for anthranilate. Mg(2+) is bound by residues Asp226 and Glu227.

It belongs to the anthranilate phosphoribosyltransferase family. Homodimer. The cofactor is Mg(2+).

It catalyses the reaction N-(5-phospho-beta-D-ribosyl)anthranilate + diphosphate = 5-phospho-alpha-D-ribose 1-diphosphate + anthranilate. It functions in the pathway amino-acid biosynthesis; L-tryptophan biosynthesis; L-tryptophan from chorismate: step 2/5. In terms of biological role, catalyzes the transfer of the phosphoribosyl group of 5-phosphorylribose-1-pyrophosphate (PRPP) to anthranilate to yield N-(5'-phosphoribosyl)-anthranilate (PRA). This is Anthranilate phosphoribosyltransferase from Rhodopseudomonas palustris (strain TIE-1).